The sequence spans 61 residues: uncharacterized protein (61 aa).

This is an uncharacterized protein from Staphylococcus epidermidis.